The chain runs to 90 residues: NAD(P)H-quinone oxidoreductase subunit H, chloroplastic (90 aa).

It belongs to the complex I 49 kDa subunit family. As to quaternary structure, NDH is composed of at least 16 different subunits, 5 of which are encoded in the nucleus.

The protein localises to the plastid. It localises to the chloroplast thylakoid membrane. It catalyses the reaction a plastoquinone + NADH + (n+1) H(+)(in) = a plastoquinol + NAD(+) + n H(+)(out). The catalysed reaction is a plastoquinone + NADPH + (n+1) H(+)(in) = a plastoquinol + NADP(+) + n H(+)(out). In terms of biological role, NDH shuttles electrons from NAD(P)H:plastoquinone, via FMN and iron-sulfur (Fe-S) centers, to quinones in the photosynthetic chain and possibly in a chloroplast respiratory chain. The immediate electron acceptor for the enzyme in this species is believed to be plastoquinone. Couples the redox reaction to proton translocation, and thus conserves the redox energy in a proton gradient. The chain is NAD(P)H-quinone oxidoreductase subunit H, chloroplastic (ndhH) from Secale cereale (Rye).